Consider the following 348-residue polypeptide: RNA 3'-terminal phosphate cyclase (348 aa).

Residues Q107 and 290–294 (HLADQ) contribute to the ATP site. H316 serves as the catalytic Tele-AMP-histidine intermediate.

This sequence belongs to the RNA 3'-terminal cyclase family. Type 1 subfamily.

The protein localises to the cytoplasm. The catalysed reaction is a 3'-end 3'-phospho-ribonucleotide-RNA + ATP = a 3'-end 2',3'-cyclophospho-ribonucleotide-RNA + AMP + diphosphate. Catalyzes the conversion of 3'-phosphate to a 2',3'-cyclic phosphodiester at the end of RNA. The mechanism of action of the enzyme occurs in 3 steps: (A) adenylation of the enzyme by ATP; (B) transfer of adenylate to an RNA-N3'P to produce RNA-N3'PP5'A; (C) and attack of the adjacent 2'-hydroxyl on the 3'-phosphorus in the diester linkage to produce the cyclic end product. The biological role of this enzyme is unknown but it is likely to function in some aspects of cellular RNA processing. In Nostoc punctiforme (strain ATCC 29133 / PCC 73102), this protein is RNA 3'-terminal phosphate cyclase.